Here is a 200-residue protein sequence, read N- to C-terminus: Potassium-transporting ATPase KdpC subunit (200 aa).

The helical transmembrane segment at leucine 9–alanine 31 threads the bilayer. Positions glycine 68–alanine 97 are disordered. Positions serine 71–glycine 96 are enriched in polar residues.

The protein belongs to the KdpC family. In terms of assembly, the system is composed of three essential subunits: KdpA, KdpB and KdpC.

It is found in the cell inner membrane. Its function is as follows. Part of the high-affinity ATP-driven potassium transport (or Kdp) system, which catalyzes the hydrolysis of ATP coupled with the electrogenic transport of potassium into the cytoplasm. This subunit acts as a catalytic chaperone that increases the ATP-binding affinity of the ATP-hydrolyzing subunit KdpB by the formation of a transient KdpB/KdpC/ATP ternary complex. The polypeptide is Potassium-transporting ATPase KdpC subunit (Rhodopseudomonas palustris (strain BisA53)).